Consider the following 303-residue polypeptide: tRNA dimethylallyltransferase 1 (303 aa).

Residue 9–16 (GPTASGKT) participates in ATP binding. Position 11–16 (11–16 (TASGKT)) interacts with substrate. 3 interaction with substrate tRNA regions span residues 34-37 (DSAL), 158-162 (QRLIR), and 239-244 (RCVGYR).

Belongs to the IPP transferase family. Monomer. Requires Mg(2+) as cofactor.

The enzyme catalyses adenosine(37) in tRNA + dimethylallyl diphosphate = N(6)-dimethylallyladenosine(37) in tRNA + diphosphate. Its function is as follows. Catalyzes the transfer of a dimethylallyl group onto the adenine at position 37 in tRNAs that read codons beginning with uridine, leading to the formation of N6-(dimethylallyl)adenosine (i(6)A). This is tRNA dimethylallyltransferase 1 from Shewanella sediminis (strain HAW-EB3).